A 435-amino-acid polypeptide reads, in one-letter code: Glutamyl-tRNA reductase (435 aa).

Substrate is bound by residues 49–52 (TCNR), S109, 114–116 (ETQ), and Q120. Catalysis depends on C50, which acts as the Nucleophile. Position 189–194 (189–194 (GAGEMS)) interacts with NADP(+).

It belongs to the glutamyl-tRNA reductase family. In terms of assembly, homodimer.

The enzyme catalyses (S)-4-amino-5-oxopentanoate + tRNA(Glu) + NADP(+) = L-glutamyl-tRNA(Glu) + NADPH + H(+). Its pathway is porphyrin-containing compound metabolism; protoporphyrin-IX biosynthesis; 5-aminolevulinate from L-glutamyl-tRNA(Glu): step 1/2. Functionally, catalyzes the NADPH-dependent reduction of glutamyl-tRNA(Glu) to glutamate 1-semialdehyde (GSA). In Listeria monocytogenes serotype 4b (strain F2365), this protein is Glutamyl-tRNA reductase.